A 353-amino-acid chain; its full sequence is BLOC-1-related complex subunit 6 (353 aa).

The interval Ala23–Thr194 is disordered. Positions Phe102–Cys126 are enriched in basic and acidic residues. Phosphoserine occurs at positions 130 and 166. Residues Gly172–Arg191 are compositionally biased toward gly residues. Residue Thr194 is modified to Phosphothreonine. Ser197 carries the post-translational modification Phosphoserine. The interval Leu225–Asp253 is disordered. The span at Pro229–Asp253 shows a compositional bias: pro residues.

The protein belongs to the BORCS6 family. Component of the BLOC-one-related complex (BORC) which is composed of BLOC1S1, BLOC1S2, BORCS5, BORCS6, BORCS7, BORCS8, KXD1 and SNAPIN.

The protein localises to the lysosome membrane. As part of the BORC complex may play a role in lysosomes movement and localization at the cell periphery. Associated with the cytosolic face of lysosomes, the BORC complex may recruit ARL8B and couple lysosomes to microtubule plus-end-directed kinesin motor. The protein is BLOC-1-related complex subunit 6 of Bos taurus (Bovine).